Reading from the N-terminus, the 288-residue chain is Coiled-coil domain-containing protein 190 (288 aa).

Residues 16-69 (LERKSARQAEARLSLRLQRLEIICLYHVKSLAREQRQLQKELQRLQQDIIKKRF) are a coiled coil. A disordered region spans residues 141-235 (GERTSCFKEG…SSVDYAGSFK (95 aa)). Basic and acidic residues predominate over residues 177–188 (HDQELSTNKTED). Positions 203-213 (ANETRSENASQ) are enriched in polar residues.

The chain is Coiled-coil domain-containing protein 190 (Ccdc190) from Mus musculus (Mouse).